The sequence spans 606 residues: 1-deoxy-D-xylulose-5-phosphate synthase (606 aa).

Residues histidine 63 and 104–106 (GHS) contribute to the thiamine diphosphate site. Aspartate 137 is a binding site for Mg(2+). Residues 138–139 (GS), asparagine 166, tyrosine 273, and glutamate 354 contribute to the thiamine diphosphate site. Residue asparagine 166 coordinates Mg(2+).

Belongs to the transketolase family. DXPS subfamily. Homodimer. It depends on Mg(2+) as a cofactor. Thiamine diphosphate serves as cofactor.

The catalysed reaction is D-glyceraldehyde 3-phosphate + pyruvate + H(+) = 1-deoxy-D-xylulose 5-phosphate + CO2. The protein operates within metabolic intermediate biosynthesis; 1-deoxy-D-xylulose 5-phosphate biosynthesis; 1-deoxy-D-xylulose 5-phosphate from D-glyceraldehyde 3-phosphate and pyruvate: step 1/1. Catalyzes the acyloin condensation reaction between C atoms 2 and 3 of pyruvate and glyceraldehyde 3-phosphate to yield 1-deoxy-D-xylulose-5-phosphate (DXP). In Sulfurimonas denitrificans (strain ATCC 33889 / DSM 1251) (Thiomicrospira denitrificans (strain ATCC 33889 / DSM 1251)), this protein is 1-deoxy-D-xylulose-5-phosphate synthase.